A 74-amino-acid polypeptide reads, in one-letter code: MARFFRRRKYCRFTAEGVKEIDYKDLNTLRNYVTETGKIVPSRITGTSARYQRQLARAIKRARYLALLPYTDRH.

It belongs to the bacterial ribosomal protein bS18 family. Part of the 30S ribosomal subunit. Forms a tight heterodimer with protein bS6.

Its function is as follows. Binds as a heterodimer with protein bS6 to the central domain of the 16S rRNA, where it helps stabilize the platform of the 30S subunit. The sequence is that of Small ribosomal subunit protein bS18 from Alkalilimnicola ehrlichii (strain ATCC BAA-1101 / DSM 17681 / MLHE-1).